We begin with the raw amino-acid sequence, 728 residues long: Phosphoribosylformylglycinamidine synthase subunit PurL (728 aa).

Histidine 42 is a catalytic residue. The ATP site is built by tyrosine 45 and lysine 84. Glutamate 86 contacts Mg(2+). Residues 87–90 (SHNH) and arginine 109 contribute to the substrate site. The active-site Proton acceptor is histidine 88. Position 110 (aspartate 110) interacts with Mg(2+). Position 237 (glutamine 237) interacts with substrate. Aspartate 265 contributes to the Mg(2+) binding site. Residue 309-311 (ESQ) coordinates substrate. 2 residues coordinate ATP: aspartate 491 and glycine 528. Asparagine 529 lines the Mg(2+) pocket. Substrate is bound at residue serine 531.

It belongs to the FGAMS family. In terms of assembly, monomer. Part of the FGAM synthase complex composed of 1 PurL, 1 PurQ and 2 PurS subunits.

Its subcellular location is the cytoplasm. The enzyme catalyses N(2)-formyl-N(1)-(5-phospho-beta-D-ribosyl)glycinamide + L-glutamine + ATP + H2O = 2-formamido-N(1)-(5-O-phospho-beta-D-ribosyl)acetamidine + L-glutamate + ADP + phosphate + H(+). It participates in purine metabolism; IMP biosynthesis via de novo pathway; 5-amino-1-(5-phospho-D-ribosyl)imidazole from N(2)-formyl-N(1)-(5-phospho-D-ribosyl)glycinamide: step 1/2. In terms of biological role, part of the phosphoribosylformylglycinamidine synthase complex involved in the purines biosynthetic pathway. Catalyzes the ATP-dependent conversion of formylglycinamide ribonucleotide (FGAR) and glutamine to yield formylglycinamidine ribonucleotide (FGAM) and glutamate. The FGAM synthase complex is composed of three subunits. PurQ produces an ammonia molecule by converting glutamine to glutamate. PurL transfers the ammonia molecule to FGAR to form FGAM in an ATP-dependent manner. PurS interacts with PurQ and PurL and is thought to assist in the transfer of the ammonia molecule from PurQ to PurL. The sequence is that of Phosphoribosylformylglycinamidine synthase subunit PurL from Campylobacter jejuni subsp. jejuni serotype O:6 (strain 81116 / NCTC 11828).